Reading from the N-terminus, the 493-residue chain is Cobyric acid synthase (493 aa).

One can recognise a GATase cobBQ-type domain in the interval 255–441 (ELEIAVLRLP…LHGLLENGRW (187 aa)). C336 acts as the Nucleophile in catalysis. H433 is a catalytic residue.

It belongs to the CobB/CobQ family. CobQ subfamily.

It participates in cofactor biosynthesis; adenosylcobalamin biosynthesis. Functionally, catalyzes amidations at positions B, D, E, and G on adenosylcobyrinic A,C-diamide. NH(2) groups are provided by glutamine, and one molecule of ATP is hydrogenolyzed for each amidation. The protein is Cobyric acid synthase of Synechococcus sp. (strain RCC307).